Reading from the N-terminus, the 468-residue chain is 3-isopropylmalate dehydratase large subunit (468 aa).

A disordered region spans residues 53–74 (QPSKTVATMDHNVPTDSRDLAG). Cys347, Cys407, and Cys410 together coordinate [4Fe-4S] cluster.

Belongs to the aconitase/IPM isomerase family. LeuC type 1 subfamily. As to quaternary structure, heterodimer of LeuC and LeuD. [4Fe-4S] cluster is required as a cofactor.

It carries out the reaction (2R,3S)-3-isopropylmalate = (2S)-2-isopropylmalate. It functions in the pathway amino-acid biosynthesis; L-leucine biosynthesis; L-leucine from 3-methyl-2-oxobutanoate: step 2/4. Catalyzes the isomerization between 2-isopropylmalate and 3-isopropylmalate, via the formation of 2-isopropylmaleate. The polypeptide is 3-isopropylmalate dehydratase large subunit (Pasteurella multocida (strain Pm70)).